Consider the following 180-residue polypeptide: MAEDDLCSLFFKLKVEDVTSSDELARHMKNASNERKPLIEPGENQSMDIDEEGGSVGHGLLYLYVDCPTMMLCFYGGSLPYNWMQGALLTNLPPYQHDVTLDEVNRGLRQASGFFGYADPMRSAYFAAFSFPGRVIKLNEQMELTSTKGKCLTFDPYASTQLRFEPGELVRHGECKFAIG.

Functionally, hydrolyzes cytokinin glucosides thus liberating free cytokinins. This is Cytokinin-beta-glucosidase 2 (ROLC2) from Panax ginseng (Korean ginseng).